The chain runs to 1029 residues: Chitin synthase 2 (1029 aa).

Disordered regions lie at residues 1-160, 174-216, and 234-257; these read MDRP…GARS, SDVD…SHLR, and AHYG…QKSR. Positions 61-77 are enriched in low complexity; the sequence is PSVSSIHSRPSSISNIP. Basic and acidic residues predominate over residues 244 to 257; it reads DQQRRGVREPQKSR. An N-linked (GlcNAc...) asparagine glycan is attached at Asn-348. A run of 8 helical transmembrane segments spans residues 639–659, 681–701, 716–736, 752–772, 791–811, 820–840, 918–938, and 952–972; these read WLNG…QLWA, VLFT…VAGG, LYIF…QFIL, SMVI…YIVI, NLIV…FIYL, SIQY…YAFC, YMVV…SEIY, and ILWS…TFAI.

The protein belongs to the chitin synthase family. Class II subfamily.

It is found in the cell membrane. The enzyme catalyses [(1-&gt;4)-N-acetyl-beta-D-glucosaminyl](n) + UDP-N-acetyl-alpha-D-glucosamine = [(1-&gt;4)-N-acetyl-beta-D-glucosaminyl](n+1) + UDP + H(+). Its function is as follows. Polymerizes chitin, a structural polymer of the cell wall and septum, by transferring the sugar moiety of UDP-GlcNAc to the non-reducing end of the growing chitin polymer. Plays an important role in cell wall integrity and has distinct functions in invasive hyphae and vegetative hyphae, but is not involved in plant infection. This Pyricularia oryzae (strain 70-15 / ATCC MYA-4617 / FGSC 8958) (Rice blast fungus) protein is Chitin synthase 2.